Reading from the N-terminus, the 480-residue chain is Amino acid permease 5 (480 aa).

Residues 1–25 (MVVQNVQDLDVLPKHSSDSFDDDGR) are disordered. At 1–31 (MVVQNVQDLDVLPKHSSDSFDDDGRPKRTGT) the chain is on the cytoplasmic side. Basic and acidic residues predominate over residues 11–25 (VLPKHSSDSFDDDGR). The next 2 helical transmembrane spans lie at 32–52 (VWTA…LSLA) and 53–73 (WAVA…FSFV). The Cytoplasmic segment spans residues 74 to 120 (TFYTSTLLCSCYRSGDSVTGKRNYTYMDAIHSNLGGIKVKVCGVVQY). The chain crosses the membrane as a helical span at residues 121–141 (VNLFGTAIGYTIASAISLVAI). Residues 142-157 (QRTSCQQMNGPNDPCH) are Extracellular-facing. Residues 158-178 (VNGNVYMIAFGIVQIIFSQIP) traverse the membrane as a helical segment. The Cytoplasmic segment spans residues 179–182 (DFDQ). Residues 183–203 (LWWLSIVAAVMSFAYSAIGLG) traverse the membrane as a helical segment. Topologically, residues 204–241 (LGVSKVVENKEIKGSLTGVTVGTVTLSGTVTSSQKIWR) are extracellular. The helical transmembrane segment at 242 to 262 (TFQSLGNIAFAYSYSMILIEI) threads the bilayer. Over 263 to 280 (QDTVKSPPAEVNTMRKAT) the chain is Cytoplasmic. Residues 281-301 (FVSVAVTTVFYMLCGCVGYAA) traverse the membrane as a helical segment. Topologically, residues 302 to 328 (FGDNAPGNLLAHGGFRNPYWLLDIANL) are extracellular. The chain crosses the membrane as a helical span at residues 329–349 (AIVIHLVGAYQVYCQPLFAFV). Residues 350–383 (EKEASRRFPESEFVTKEIKIQLFPGKPFNLNLFR) are Cytoplasmic-facing. A helical membrane pass occupies residues 384–404 (LVWRTFFVMTTTLISMLMPFF). Residues 405–406 (ND) lie on the Extracellular side of the membrane. A helical membrane pass occupies residues 407–427 (VVGLLGAIGFWPLTVYFPVEM). The Cytoplasmic segment spans residues 428–445 (YIAQKNVPRWGTKWVCLQ). A helical transmembrane segment spans residues 446–466 (VLSVTCLFVSVAAAAGSVIGI). The Extracellular segment spans residues 467–480 (VSDLKVYKPFQSEF).

This sequence belongs to the amino acid/polyamine transporter 2 family. Amino acid/auxin permease (AAAP) (TC 2.A.18.2) subfamily. In terms of tissue distribution, expressed in leaves, stems, roots, siliques and flowers.

The protein localises to the cell membrane. With respect to regulation, inhibited by 2,4-dinitrophenol. In terms of biological role, amino acid-proton symporter. Stereospecific transporter with a broad specificity for glutamate and both neutral and basic amino acids. Reduced affinities for asparagine and valine. High affinity transport of the cationic amino acids arginine and lysine, but not of histidine. This chain is Amino acid permease 5 (AAP5), found in Arabidopsis thaliana (Mouse-ear cress).